The sequence spans 446 residues: Citrate/sodium symporter (446 aa).

A run of 5 helical transmembrane segments spans residues 23–43 (IFGMPLPLYAFALITLLLSHF), 46–66 (AIPTDLVGGFALMFVMGAIFG), 79–99 (IGGAPVMIFLVAAYFVYAGIF), 110–130 (VMDKSNFLNLFIAVLITGAIL), and 148–168 (ILAGIVGASLFGIVIGLCFGI). Na(+) is bound by residues Ile-181 and Gly-183. 2 residues coordinate citrate: Asn-186 and Gly-187. The next 5 helical transmembrane spans lie at 213–233 (IAILTIANIFAIIFAALLDMI), 267–287 (ETAVGMVLSTTCFLLAYVVAK), 289–309 (ILPSIGGVSIHYFAWMVLIVA), 335–355 (QLLWVLMVGVGVCYTDLQEII), and 364–384 (VIAAIIVVGAVVGAAIGGWLI). 2 residues coordinate Na(+): Met-399 and Asn-401. Positions 402, 404, 405, and 428 each coordinate citrate. A helical membrane pass occupies residues 425–445 (ISSRLGGGIVLVIASIVFSMM).

The protein belongs to the 2-hydroxycarboxylate transporter (2-HCT) (TC 2.A.24) family. In terms of assembly, homodimer.

The protein resides in the cell inner membrane. The catalysed reaction is citrate(out) + 2 Na(+)(out) = citrate(in) + 2 Na(+)(in). In terms of biological role, secondary active transporter that catalyzes the uptake of citrate across the membrane with the concomitant uptake of sodium. Is specific for citrate. The chain is Citrate/sodium symporter from Salmonella dublin.